The primary structure comprises 296 residues: Decaprenyl diphosphate synthase (296 aa).

Residues 1–58 are disordered; it reads MVRNERTLKSTDFPQLPPAPDDYPTFPDKSTWPVVFPMLPPSPDGGPRRPPQHTSKAV. The active site involves aspartate 76. Aspartate 76 serves as a coordination point for Mg(2+). Substrate is bound by residues 77–80, tryptophan 81, arginine 89, histidine 93, and 121–123; these read GNGR and STE. Catalysis depends on asparagine 124, which acts as the Proton acceptor. Residues tryptophan 125, arginine 127, arginine 244, and 250 to 252 each bind substrate; that span reads RSS. Glutamate 263 is a Mg(2+) binding site.

Belongs to the UPP synthase family. In terms of assembly, homodimer. Mg(2+) is required as a cofactor.

Its subcellular location is the cell membrane. The enzyme catalyses (2Z,6E)-farnesyl diphosphate + 7 isopentenyl diphosphate = (2Z,6Z,10Z,14Z,18Z,22Z,26Z,30Z,34E)-decaprenyl diphosphate + 7 diphosphate. The catalysed reaction is n isopentenyl diphosphate + (2E,6E)-farnesyl diphosphate = a di-trans,poly-cis-polyprenyl diphosphate + n diphosphate. Its function is as follows. Catalyzes the sequential condensation of isopentenyl diphosphate (IPP) in the cis configuration with (2Z,6E)-farnesyl diphosphate (Z-FPP or EZ-FPP) generating the 50 carbon product trans,polycis-decaprenyl diphosphate. When (2E,6E)-farnesyl diphosphate (E-FPP or EE-FPP) is used in vitro, both primary products decaprenyl diphosphate and (2E,6E,10E)-geranylgeranyl diphosphate (EEE-GGPP) are synthesized. M.tuberculosis does not synthesize (2E,6E,10Z)-geranylgeranyl diphosphate (EEZ-GGPP) and heptaprenyl diphosphate. Can also accept many different allylic substrates, including E-geranyl diphosphate (E-GPP), neryl diphosphate (NPP), and all-trans-geranyl-geranyl diphosphate. The protein is Decaprenyl diphosphate synthase (uppS) of Mycobacterium leprae (strain TN).